The primary structure comprises 93 residues: Conotoxin Mr105 (93 aa).

The first 22 residues, 1–22 (MQRGAVLLGVVALLVLWPQAGA), serve as a signal peptide directing secretion. Residues 23 to 33 (ELYDVNDPDVR) constitute a propeptide that is removed on maturation.

Belongs to the F superfamily. In terms of processing, contains 4 disulfide bonds. Expressed by the venom duct.

The protein localises to the secreted. In Conus marmoreus (Marble cone), this protein is Conotoxin Mr105.